Consider the following 276-residue polypeptide: NH(3)-dependent NAD(+) synthetase (276 aa).

Position 46-53 (glycine 46–serine 53) interacts with ATP. Aspartate 52 lines the Mg(2+) pocket. Arginine 141 contributes to the deamido-NAD(+) binding site. Residue threonine 161 coordinates ATP. Residue glutamate 166 participates in Mg(2+) binding. Lysine 174 and aspartate 181 together coordinate deamido-NAD(+). ATP contacts are provided by lysine 190 and threonine 212. Histidine 261–lysine 262 serves as a coordination point for deamido-NAD(+).

This sequence belongs to the NAD synthetase family. As to quaternary structure, homodimer.

It carries out the reaction deamido-NAD(+) + NH4(+) + ATP = AMP + diphosphate + NAD(+) + H(+). The protein operates within cofactor biosynthesis; NAD(+) biosynthesis; NAD(+) from deamido-NAD(+) (ammonia route): step 1/1. Catalyzes the ATP-dependent amidation of deamido-NAD to form NAD. Uses ammonia as a nitrogen source. The chain is NH(3)-dependent NAD(+) synthetase from Limosilactobacillus fermentum (strain NBRC 3956 / LMG 18251) (Lactobacillus fermentum).